The sequence spans 382 residues: UDP-N-acetylenolpyruvoylglucosamine reductase (382 aa).

One can recognise an FAD-binding PCMH-type domain in the interval 50 to 253 (RVGGPAVLAE…REAVLRLRAS (204 aa)). The active site involves R193. S270 serves as the catalytic Proton donor. The active site involves E374.

The protein belongs to the MurB family. It depends on FAD as a cofactor.

It localises to the cytoplasm. It carries out the reaction UDP-N-acetyl-alpha-D-muramate + NADP(+) = UDP-N-acetyl-3-O-(1-carboxyvinyl)-alpha-D-glucosamine + NADPH + H(+). Its pathway is cell wall biogenesis; peptidoglycan biosynthesis. Functionally, cell wall formation. In Nocardia farcinica (strain IFM 10152), this protein is UDP-N-acetylenolpyruvoylglucosamine reductase.